A 342-amino-acid chain; its full sequence is Heparan sulfate glucosamine 3-O-sulfotransferase 6 (342 aa).

The tract at residues 1–21 (MAGSGGLGGGAGGGQGAGAGQ) is disordered. Topologically, residues 1 to 31 (MAGSGGLGGGAGGGQGAGAGQGAALRASRAP) are cytoplasmic. The helical; Signal-anchor for type II membrane protein transmembrane segment at 32-49 (MLLVALVLGAYCLCALPG) threads the bilayer. The Lumenal portion of the chain corresponds to 50–342 (RCPPAARAPA…QMTGQDFGWG (293 aa)). The interval 55 to 85 (ARAPAPAPAPSEPSSSVHRPGAPGLPLASGP) is disordered. A compositionally biased stretch (low complexity) spans 66 to 85 (EPSSSVHRPGAPGLPLASGP). 100–104 (KGGTR) provides a ligand contact to 3'-phosphoadenylyl sulfate. Substrate contacts are provided by residues 122-128 (EPHFFDR) and 153-156 (KTPS). Positions 181 and 189 each coordinate 3'-phosphoadenylyl sulfate. 220–221 (WS) is a binding site for substrate. N-linked (GlcNAc...) asparagine glycosylation is present at asparagine 281. A disulfide bond links cysteine 288 and cysteine 300. Residue 305 to 309 (KGRPH) coordinates 3'-phosphoadenylyl sulfate.

This sequence belongs to the sulfotransferase 1 family.

It is found in the golgi apparatus membrane. It catalyses the reaction alpha-D-glucosaminyl-[heparan sulfate](n) + 3'-phosphoadenylyl sulfate = 3-sulfo-alpha-D-glucosaminyl-[heparan sulfate](n) + adenosine 3',5'-bisphosphate + H(+). Sulfotransferase that utilizes 3'-phospho-5'-adenylyl sulfate (PAPS) to catalyze the transfer of a sulfo group to heparan sulfate. The substrate-specific O-sulfation generates an enzyme-modified heparan sulfate which acts as a binding receptor to Herpes Simplex Virus-1 (HSV-1) and permits its entry. Unlike 3-OST-1, does not convert non-anticoagulant heparan sulfate to anticoagulant heparan sulfate. The sequence is that of Heparan sulfate glucosamine 3-O-sulfotransferase 6 (HS3ST6) from Homo sapiens (Human).